A 414-amino-acid polypeptide reads, in one-letter code: Mannan endo-1,4-beta-mannosidase 3 (414 aa).

The signal sequence occupies residues 1 to 19 (MKCLCFVVLLAILIAQNSS). N-linked (GlcNAc...) asparagine glycans are attached at residues N17 and N75. W87 contacts substrate. 2 N-linked (GlcNAc...) asparagine glycosylation sites follow: N133 and N153. A substrate-binding site is contributed by N202. Catalysis depends on E203, which acts as the Proton donor. Position 283 (Y283) interacts with substrate. E323 functions as the Nucleophile in the catalytic mechanism. N-linked (GlcNAc...) asparagine glycosylation occurs at N343. W365 is a binding site for substrate. An N-linked (GlcNAc...) asparagine glycan is attached at N386.

Belongs to the glycosyl hydrolase 5 (cellulase A) family. Expressed in leaves, flowers, siliques and seeds.

The protein resides in the secreted. It catalyses the reaction Random hydrolysis of (1-&gt;4)-beta-D-mannosidic linkages in mannans, galactomannans and glucomannans.. The sequence is that of Mannan endo-1,4-beta-mannosidase 3 (MAN3) from Arabidopsis thaliana (Mouse-ear cress).